The sequence spans 314 residues: Acetyl-coenzyme A carboxylase carboxyl transferase subunit alpha (314 aa).

Residues 32-289 (EIDMLEASLE…KSAFVAQLDS (258 aa)) form the CoA carboxyltransferase C-terminal domain.

This sequence belongs to the AccA family. Acetyl-CoA carboxylase is a heterohexamer composed of biotin carboxyl carrier protein (AccB), biotin carboxylase (AccC) and two subunits each of ACCase subunit alpha (AccA) and ACCase subunit beta (AccD).

The protein resides in the cytoplasm. It carries out the reaction N(6)-carboxybiotinyl-L-lysyl-[protein] + acetyl-CoA = N(6)-biotinyl-L-lysyl-[protein] + malonyl-CoA. Its pathway is lipid metabolism; malonyl-CoA biosynthesis; malonyl-CoA from acetyl-CoA: step 1/1. In terms of biological role, component of the acetyl coenzyme A carboxylase (ACC) complex. First, biotin carboxylase catalyzes the carboxylation of biotin on its carrier protein (BCCP) and then the CO(2) group is transferred by the carboxyltransferase to acetyl-CoA to form malonyl-CoA. The protein is Acetyl-coenzyme A carboxylase carboxyl transferase subunit alpha of Staphylococcus aureus (strain JH9).